A 215-amino-acid polypeptide reads, in one-letter code: ER lumen protein-retaining receptor B (215 aa).

Helical transmembrane passes span 6–26, 55–77, 98–118, 120–140, 149–169, and 178–198; these read LAGDMTHLASVLVLLLKIHTI, FVSLYNTSMKLVFLGSSFSIVWY, WFLVLPCFLLALLIHEKFTFL, VLWTSSLYLEAVAILPQLVLL, LTGQYIFLLGGYRGLYILNWI, and FVHWITWIAGFVQTLLYADFF.

The protein belongs to the ERD2 family.

It is found in the golgi apparatus membrane. Its subcellular location is the endoplasmic reticulum membrane. Its function is as follows. Determines the specificity of the luminal endoplasmic reticulum protein retention system. Required for the retro-transport of calreticulin-3 (CRT3) from the Golgi to the ER. Specifically required for elongation factor Tu receptor (EFR) function in response to the pathogen-associated molecular pattern (PAMP) elf18. In Arabidopsis thaliana (Mouse-ear cress), this protein is ER lumen protein-retaining receptor B (ERD2B).